A 144-amino-acid chain; its full sequence is Maximins 7/H6 (144 aa).

A signal peptide spans Met-1–Ala-18. The propeptide occupies Arg-19 to Arg-43. Asn-70 bears the Asparagine amide mark. Positions Thr-74–Arg-123 are excised as a propeptide. Leu-143 bears the Leucine amide mark.

Belongs to the bombinin family. Expressed by the skin glands.

The protein resides in the secreted. In terms of biological role, maximin-7 shows antimicrobial activity against bacteria and against the fungus C.albicans. It has little hemolytic activity. Functionally, maximin-H6 shows antimicrobial activity against bacteria and against the fungus C.albicans. Shows strong hemolytic activity. This Bombina maxima (Giant fire-bellied toad) protein is Maximins 7/H6.